A 339-amino-acid chain; its full sequence is Major pollen allergen Lol p 5b (339 aa).

A signal peptide spans 1-25 (MAVQKHTVALFLAVALVAGPAASYA). Repeat copies occupy residues 32-34 (PAT), 35-37 (PAT), 38-40 (PAA), 41-43 (PAT), 44-46 (AAT), 47-49 (PAT), 50-52 (PAT), 53-55 (PAT), and 56-58 (PAA). A 9 X 3 AA tandem repeats of [PA]-A-[TA] region spans residues 32–58 (PATPATPAAPATAATPATPATPATPAA). Over residues 36 to 58 (ATPAAPATAATPATPATPATPAA) the composition is skewed to low complexity. Positions 36–65 (ATPAAPATAATPATPATPATPAAVPSGKAT) are disordered. A 2-1; truncated repeat occupies 285–290 (ATPAAA). The interval 285–334 (ATPAAAATATPTPAAATATATPAAAYATATPAAATATATPAAATATPAAA) is 6 X 9 AA approximate tandem repeats of T-A-T-A-T-P-A-A-A. 4 tandem repeats follow at residues 292–300 (TATPTPAAA), 301–309 (TATATPAAA), 310–318 (YATATPAAA), and 319–327 (TATATPAAA). Residues 328-334 (TATPAAA) form a 2-6; truncated repeat.

This sequence belongs to the Poa p IX/Phl p VI allergen family. As to expression, pollen, starch granules.

This chain is Major pollen allergen Lol p 5b, found in Lolium perenne (Perennial ryegrass).